The primary structure comprises 109 residues: Parvalbumin alpha (109 aa).

EF-hand domains follow at residues 38-73 and 77-109; these read KSKE…FTPE and LSDK…VSES. Ca(2+)-binding residues include D51, D53, S55, F57, E59, E62, D90, D92, D94, K96, and E101.

It belongs to the parvalbumin family.

In terms of biological role, in muscle, parvalbumin is thought to be involved in relaxation after contraction. It binds two calcium ions. This chain is Parvalbumin alpha, found in Pelophylax lessonae (Pool frog).